A 660-amino-acid polypeptide reads, in one-letter code: Bifunctional polymyxin resistance protein ArnA (660 aa).

Residues methionine 1–valine 304 are formyltransferase ArnAFT. The Proton donor; for formyltransferase activity role is filled by histidine 104. Residues arginine 114 and threonine 136–aspartate 140 each bind (6R)-10-formyltetrahydrofolate. Residues arginine 314–lysine 660 are dehydrogenase ArnADH. Residues aspartate 347 and aspartate 368–valine 369 contribute to the NAD(+) site. UDP-alpha-D-glucuronate contacts are provided by residues alanine 393, tyrosine 398, and threonine 432–serine 433. Glutamate 434 acts as the Proton acceptor; for decarboxylase activity in catalysis. UDP-alpha-D-glucuronate contacts are provided by residues arginine 460, asparagine 492, lysine 526–arginine 535, and tyrosine 613. Arginine 619 serves as the catalytic Proton donor; for decarboxylase activity.

This sequence in the N-terminal section; belongs to the Fmt family. UDP-L-Ara4N formyltransferase subfamily. In the C-terminal section; belongs to the NAD(P)-dependent epimerase/dehydratase family. UDP-glucuronic acid decarboxylase subfamily. As to quaternary structure, homohexamer, formed by a dimer of trimers.

It catalyses the reaction UDP-alpha-D-glucuronate + NAD(+) = UDP-beta-L-threo-pentopyranos-4-ulose + CO2 + NADH. It carries out the reaction UDP-4-amino-4-deoxy-beta-L-arabinose + (6R)-10-formyltetrahydrofolate = UDP-4-deoxy-4-formamido-beta-L-arabinose + (6S)-5,6,7,8-tetrahydrofolate + H(+). The protein operates within nucleotide-sugar biosynthesis; UDP-4-deoxy-4-formamido-beta-L-arabinose biosynthesis; UDP-4-deoxy-4-formamido-beta-L-arabinose from UDP-alpha-D-glucuronate: step 1/3. It participates in nucleotide-sugar biosynthesis; UDP-4-deoxy-4-formamido-beta-L-arabinose biosynthesis; UDP-4-deoxy-4-formamido-beta-L-arabinose from UDP-alpha-D-glucuronate: step 3/3. It functions in the pathway bacterial outer membrane biogenesis; lipopolysaccharide biosynthesis. Bifunctional enzyme that catalyzes the oxidative decarboxylation of UDP-glucuronic acid (UDP-GlcUA) to UDP-4-keto-arabinose (UDP-Ara4O) and the addition of a formyl group to UDP-4-amino-4-deoxy-L-arabinose (UDP-L-Ara4N) to form UDP-L-4-formamido-arabinose (UDP-L-Ara4FN). The modified arabinose is attached to lipid A and is required for resistance to polymyxin and cationic antimicrobial peptides. This Proteus mirabilis (strain HI4320) protein is Bifunctional polymyxin resistance protein ArnA.